Reading from the N-terminus, the 261-residue chain is MRILITNDDGINAPGLEVLAEIAAEIAGPGGEVWTVAPAFEQSGVGHCISYTQPTMIAELGPRRYAAEGSPADCVMAGLYDVMNGDAPDLILSGVNRGNNSGENALYSGTLGGAMEGALQGHKAIALSQYYGPAMATADDPFDAARRHGVAVVRKLLAADQWGGPGYGTFYNVNFPPVLAAGVKGVRAAPQGLRSHARFRVEAQLSPSGRRFLWVQGSAQNVPAEQGSDVSLNLDGYISVTPMRADLTAYDKLADLEAALA.

4 residues coordinate a divalent metal cation: Asp-8, Asp-9, Ser-43, and Asn-96.

This sequence belongs to the SurE nucleotidase family. It depends on a divalent metal cation as a cofactor.

It localises to the cytoplasm. It carries out the reaction a ribonucleoside 5'-phosphate + H2O = a ribonucleoside + phosphate. Its function is as follows. Nucleotidase that shows phosphatase activity on nucleoside 5'-monophosphates. The chain is 5'-nucleotidase SurE from Dinoroseobacter shibae (strain DSM 16493 / NCIMB 14021 / DFL 12).